Reading from the N-terminus, the 104-residue chain is Urease subunit beta (104 aa).

It belongs to the urease beta subunit family. Heterotrimer of UreA (gamma), UreB (beta) and UreC (alpha) subunits. Three heterotrimers associate to form the active enzyme.

It localises to the cytoplasm. The catalysed reaction is urea + 2 H2O + H(+) = hydrogencarbonate + 2 NH4(+). Its pathway is nitrogen metabolism; urea degradation; CO(2) and NH(3) from urea (urease route): step 1/1. This is Urease subunit beta from Mycobacterium bovis (strain BCG / Pasteur 1173P2).